Reading from the N-terminus, the 477-residue chain is Ubiquinone biosynthesis monooxygenase COQ6, mitochondrial (477 aa).

A mitochondrion-targeting transit peptide spans 1–25 (MLGVLRIQGALASAGQARLLSVRLL).

Belongs to the UbiH/COQ6 family. In terms of assembly, component of a multi-subunit COQ enzyme complex. The cofactor is FAD.

The protein localises to the mitochondrion inner membrane. The enzyme catalyses a 4-hydroxy-3-(all-trans-polyprenyl)benzoate + 2 reduced [2Fe-2S]-[ferredoxin] + O2 + 2 H(+) = a 3,4-dihydroxy-5-(all-trans-polyprenyl)benzoate + 2 oxidized [2Fe-2S]-[ferredoxin] + H2O. It carries out the reaction a 2-methoxy-6-(all-trans-polyprenyl)phenol + 2 reduced [2Fe-2S]-[ferredoxin] + O2 + 2 H(+) = a 2-methoxy-6-(all-trans-polyprenyl)benzene-1,4-diol + 2 oxidized [2Fe-2S]-[ferredoxin] + H2O. It participates in cofactor biosynthesis; ubiquinone biosynthesis. Its function is as follows. FAD-dependent monooxygenase required for two non-consecutive steps during ubiquinone biosynthesis. Required for the C5-ring hydroxylation during ubiquinone biosynthesis by catalyzing the hydroxylation of 4-hydroxy-3-(all-trans-polyprenyl)benzoic acid to 3,4-dihydroxy-5-(all-trans-polyprenyl)benzoic acid. Also acts downstream of coq4, for the C1-hydroxylation during ubiquinone biosynthesis by catalyzing the hydroxylation of 2-methoxy-6-(all-trans-polyprenyl)phenol to 2-methoxy-6-(all-trans-polyprenyl)benzene-1,4-diol. The electrons required for the hydroxylation reaction are funneled indirectly to Coq6 from NADPH via a ferredoxin/ferredoxin reductase system. This is Ubiquinone biosynthesis monooxygenase COQ6, mitochondrial from Drosophila melanogaster (Fruit fly).